The sequence spans 865 residues: Bifunctional uridylyltransferase/uridylyl-removing enzyme (865 aa).

Positions 1–318 (MPHVDLNPLK…FPRPDSDARL (318 aa)) are uridylyltransferase. Residues 319-675 (IDDDFRNLRE…VRPTEHGEGL (357 aa)) form a uridylyl-removing region. Residues 437–559 (VDQHTLAVVR…VGDERRLAAL (123 aa)) form the HD domain. ACT domains follow at residues 676–762 (QVMV…RLPH) and 789–865 (RLSV…QQAA). Residues 747–767 (DPHAARHAHAPRRLPHSHARR) are disordered. The segment covering 751-767 (ARHAHAPRRLPHSHARR) has biased composition (basic residues).

It belongs to the GlnD family. Mg(2+) serves as cofactor.

It catalyses the reaction [protein-PII]-L-tyrosine + UTP = [protein-PII]-uridylyl-L-tyrosine + diphosphate. The catalysed reaction is [protein-PII]-uridylyl-L-tyrosine + H2O = [protein-PII]-L-tyrosine + UMP + H(+). Its activity is regulated as follows. Uridylyltransferase (UTase) activity is inhibited by glutamine, while glutamine activates uridylyl-removing (UR) activity. Modifies, by uridylylation and deuridylylation, the PII regulatory proteins (GlnB and homologs), in response to the nitrogen status of the cell that GlnD senses through the glutamine level. Under low glutamine levels, catalyzes the conversion of the PII proteins and UTP to PII-UMP and PPi, while under higher glutamine levels, GlnD hydrolyzes PII-UMP to PII and UMP (deuridylylation). Thus, controls uridylylation state and activity of the PII proteins, and plays an important role in the regulation of nitrogen assimilation and metabolism. In Bordetella parapertussis (strain 12822 / ATCC BAA-587 / NCTC 13253), this protein is Bifunctional uridylyltransferase/uridylyl-removing enzyme.